Reading from the N-terminus, the 389-residue chain is Inner membrane transport protein YdhP (389 aa).

Topologically, residues 1-6 are cytoplasmic; the sequence is MKINYP. Residues 7 to 27 form a helical membrane-spanning segment; the sequence is LLALAIGAFGIGTTEFSPMGL. Over 28–43 the chain is Periplasmic; the sequence is LPVIARGVDVSIPAAG. The helical transmembrane segment at 44-64 threads the bilayer; that stretch reads MLISAYAVGVMVGAPLMTLLL. At 65 to 70 the chain is on the cytoplasmic side; it reads SHRARR. The helical transmembrane segment at 71–91 threads the bilayer; it reads SALIFLMAIFTLGNVLSAIAP. The Periplasmic segment spans residues 92–100; it reads DYMTLMLSR. A helical transmembrane segment spans residues 101 to 121; that stretch reads ILTSLNHGAFFGLGSVVAASV. The Cytoplasmic portion of the chain corresponds to 122–130; that stretch reads VPKHKQASA. A helical membrane pass occupies residues 131 to 151; the sequence is VATMFMGLTLANIGGVPAATW. Residues 152 to 159 lie on the Periplasmic side of the membrane; sequence LGETIGWR. The helical transmembrane segment at 160 to 180 threads the bilayer; the sequence is MSFLATAGLGVISMVSLFFSL. At 181–203 the chain is on the cytoplasmic side; it reads PKGGAGARPEVKKELAVLMRPQV. A helical transmembrane segment spans residues 204-224; that stretch reads LSALLTTVLGAGAMFTLYTYI. The Periplasmic portion of the chain corresponds to 225-236; sequence SPVLQSITHATP. The helical transmembrane segment at 237-257 threads the bilayer; that stretch reads VFVTAMLVLIGVGFSIGNYLG. Topologically, residues 258–266 are cytoplasmic; that stretch reads GKLADRSVN. Residues 267–287 traverse the membrane as a helical segment; the sequence is GTLKGFLLLLMVIMLAIPFLA. Topologically, residues 288–290 are periplasmic; the sequence is RNK. The chain crosses the membrane as a helical span at residues 291–311; sequence FGAAISMAVWGAATFAVVPPL. At 312–330 the chain is on the cytoplasmic side; sequence QMRVMRVASEAPGLSSSVN. A helical transmembrane segment spans residues 331-351; it reads IGAFNLGNALGAAAGGAVISA. Residues 352 to 356 are Periplasmic-facing; sequence GLGYS. A helical membrane pass occupies residues 357 to 377; it reads FVPVMGAIVAGLALLLVFMSA. Residues 378-389 lie on the Cytoplasmic side of the membrane; the sequence is RKQPETVCVANS.

It belongs to the major facilitator superfamily.

Its subcellular location is the cell inner membrane. The protein is Inner membrane transport protein YdhP (ydhP) of Escherichia coli O157:H7.